Here is a 157-residue protein sequence, read N- to C-terminus: NADPH-dependent 7-cyano-7-deazaguanine reductase (157 aa).

The active-site Thioimide intermediate is C55. The active-site Proton donor is the D62. Residues 77–79 (VES) and 96–97 (HE) each bind substrate.

It belongs to the GTP cyclohydrolase I family. QueF type 1 subfamily.

The protein localises to the cytoplasm. The enzyme catalyses 7-aminomethyl-7-carbaguanine + 2 NADP(+) = 7-cyano-7-deazaguanine + 2 NADPH + 3 H(+). The protein operates within tRNA modification; tRNA-queuosine biosynthesis. In terms of biological role, catalyzes the NADPH-dependent reduction of 7-cyano-7-deazaguanine (preQ0) to 7-aminomethyl-7-deazaguanine (preQ1). This Neisseria gonorrhoeae (strain ATCC 700825 / FA 1090) protein is NADPH-dependent 7-cyano-7-deazaguanine reductase.